A 115-amino-acid polypeptide reads, in one-letter code: Large ribosomal subunit protein eL36 (115 aa).

The protein belongs to the eukaryotic ribosomal protein eL36 family. As to quaternary structure, component of the large ribosomal subunit.

It localises to the cytoplasm. Its subcellular location is the cytosol. Component of the large ribosomal subunit. This Drosophila melanogaster (Fruit fly) protein is Large ribosomal subunit protein eL36 (RpL36).